Here is a 465-residue protein sequence, read N- to C-terminus: Kynureninase (465 aa).

Pyridoxal 5'-phosphate contacts are provided by residues leucine 116, threonine 117, phenylalanine 144 to aspartate 147, aspartate 231, histidine 234, and tyrosine 256. N6-(pyridoxal phosphate)lysine is present on lysine 257. Pyridoxal 5'-phosphate contacts are provided by tryptophan 291 and asparagine 319.

The protein belongs to the kynureninase family. In terms of assembly, homodimer. It depends on pyridoxal 5'-phosphate as a cofactor.

The protein resides in the cytoplasm. It carries out the reaction L-kynurenine + H2O = anthranilate + L-alanine + H(+). The catalysed reaction is 3-hydroxy-L-kynurenine + H2O = 3-hydroxyanthranilate + L-alanine + H(+). It functions in the pathway amino-acid degradation; L-kynurenine degradation; L-alanine and anthranilate from L-kynurenine: step 1/1. The protein operates within cofactor biosynthesis; NAD(+) biosynthesis; quinolinate from L-kynurenine: step 2/3. Functionally, catalyzes the cleavage of L-kynurenine (L-Kyn) and L-3-hydroxykynurenine (L-3OHKyn) into anthranilic acid (AA) and 3-hydroxyanthranilic acid (3-OHAA), respectively. This chain is Kynureninase, found in Scheffersomyces stipitis (strain ATCC 58785 / CBS 6054 / NBRC 10063 / NRRL Y-11545) (Yeast).